We begin with the raw amino-acid sequence, 156 residues long: E3 ubiquitin-protein ligase RNF181 (156 aa).

An RING-type; atypical zinc finger spans residues 79 to 120; it reads CPVCLLEFEEQESVREMPCKHLFHTGCILPWLNKTNSCPLCR. The interval 135–156 is disordered; the sequence is KDKERRRQREHRLEDLHGAMYT.

The protein belongs to the RNF181 family.

It catalyses the reaction S-ubiquitinyl-[E2 ubiquitin-conjugating enzyme]-L-cysteine + [acceptor protein]-L-lysine = [E2 ubiquitin-conjugating enzyme]-L-cysteine + N(6)-ubiquitinyl-[acceptor protein]-L-lysine.. Its pathway is protein modification; protein ubiquitination. Its function is as follows. E3 ubiquitin-protein ligase which accepts ubiquitin from an E2 ubiquitin-conjugating enzyme in the form of a thioester and then directly transfers the ubiquitin to targeted substrates. Catalyzes monoubiquitination of 26S proteasome subunit PSMC2/RPT1. In Danio rerio (Zebrafish), this protein is E3 ubiquitin-protein ligase RNF181 (rnf181).